We begin with the raw amino-acid sequence, 425 residues long: MAAEKPHMNLAVIGHIDHGKSTTVGRLLFETGTVPPHIIESFRKEAESKGKGSFEFAWVMDSLKEERERGITIDIAHKRFDTDKYYFTVVDCPGHRDFVKNMITGASQADAALLVVAAPDGVMEQTKEHVFLSRTLGINQLIIGINKMDAAKYDEKRYNEVKEQLSQLLKMVGYKPDDISFIPMSAFVGDNIAKKSENTPWYKGPTVLDALNALSEPEKPTNLPMRLPIQDVYSISGIGTVPVGRVETGIMKKGMKVSFMPANKEGEIKSIEMHHEEIPQALPGDNVGFNVRGIGKGDIRRGDVCGPSDVPPTVAEEFIAQVVVLHHPSALTVGYTPVFHCHTAQIACSFVELMKKLDPRTGQVKEENPTFLKTGDAAIVKIRPTQPMVIEKVKEIPQLGRFAVRDMGSTIAAGVCMDITPKQMR.

The tr-type G domain maps to 5 to 221 (KPHMNLAVIG…NALSEPEKPT (217 aa)). The G1 stretch occupies residues 14-21 (GHIDHGKS). 14–21 (GHIDHGKS) lines the GTP pocket. Position 21 (serine 21) interacts with Mg(2+). Positions 70 to 74 (GITID) are G2. A G3 region spans residues 91–94 (DCPG). GTP contacts are provided by residues 91-95 (DCPGH) and 146-149 (NKMD). Residues 146–149 (NKMD) form a G4 region. The tract at residues 185-187 (SAF) is G5.

It belongs to the TRAFAC class translation factor GTPase superfamily. Classic translation factor GTPase family. EF-Tu/EF-1A subfamily.

Its subcellular location is the cytoplasm. The catalysed reaction is GTP + H2O = GDP + phosphate + H(+). Its function is as follows. GTP hydrolase that promotes the GTP-dependent binding of aminoacyl-tRNA to the A-site of ribosomes during protein biosynthesis. The chain is Elongation factor 1-alpha from Methanoculleus marisnigri (strain ATCC 35101 / DSM 1498 / JR1).